The chain runs to 503 residues: Probable cytosol aminopeptidase (503 aa).

Mn(2+)-binding residues include K274 and D279. K286 is an active-site residue. Mn(2+)-binding residues include D297, D356, and E358. Residue R360 is part of the active site.

This sequence belongs to the peptidase M17 family. The cofactor is Mn(2+).

It is found in the cytoplasm. It catalyses the reaction Release of an N-terminal amino acid, Xaa-|-Yaa-, in which Xaa is preferably Leu, but may be other amino acids including Pro although not Arg or Lys, and Yaa may be Pro. Amino acid amides and methyl esters are also readily hydrolyzed, but rates on arylamides are exceedingly low.. The catalysed reaction is Release of an N-terminal amino acid, preferentially leucine, but not glutamic or aspartic acids.. Functionally, presumably involved in the processing and regular turnover of intracellular proteins. Catalyzes the removal of unsubstituted N-terminal amino acids from various peptides. In Burkholderia pseudomallei (strain 1710b), this protein is Probable cytosol aminopeptidase.